The following is a 462-amino-acid chain: Argininosuccinate lyase (462 aa).

The protein belongs to the lyase 1 family. Argininosuccinate lyase subfamily.

It is found in the cytoplasm. The enzyme catalyses 2-(N(omega)-L-arginino)succinate = fumarate + L-arginine. It participates in amino-acid biosynthesis; L-arginine biosynthesis; L-arginine from L-ornithine and carbamoyl phosphate: step 3/3. This chain is Argininosuccinate lyase, found in Bacillus anthracis (strain A0248).